Consider the following 174-residue polypeptide: RNA pyrophosphohydrolase (174 aa).

A Nudix hydrolase domain is found at 6 to 149 (GYRPNVGIIL…KRDVYLGALK (144 aa)). The short motif at 38–59 (GGIKPGESPETAMYRELYEEVG) is the Nudix box element.

Belongs to the Nudix hydrolase family. RppH subfamily. Requires a divalent metal cation as cofactor.

Its function is as follows. Accelerates the degradation of transcripts by removing pyrophosphate from the 5'-end of triphosphorylated RNA, leading to a more labile monophosphorylated state that can stimulate subsequent ribonuclease cleavage. The chain is RNA pyrophosphohydrolase from Neisseria meningitidis serogroup C / serotype 2a (strain ATCC 700532 / DSM 15464 / FAM18).